The chain runs to 198 residues: Probable nicotinate-nucleotide adenylyltransferase (198 aa).

The protein belongs to the NadD family.

The enzyme catalyses nicotinate beta-D-ribonucleotide + ATP + H(+) = deamido-NAD(+) + diphosphate. The protein operates within cofactor biosynthesis; NAD(+) biosynthesis; deamido-NAD(+) from nicotinate D-ribonucleotide: step 1/1. Functionally, catalyzes the reversible adenylation of nicotinate mononucleotide (NaMN) to nicotinic acid adenine dinucleotide (NaAD). The protein is Probable nicotinate-nucleotide adenylyltransferase of Chlorobium limicola (strain DSM 245 / NBRC 103803 / 6330).